We begin with the raw amino-acid sequence, 171 residues long: Co-chaperone protein HscB (171 aa).

One can recognise a J domain in the interval 2–74 (DYFTLFGLPA…LTRAEYLLSL (73 aa)).

It belongs to the HscB family. Interacts with HscA and stimulates its ATPase activity. Interacts with IscU.

In terms of biological role, co-chaperone involved in the maturation of iron-sulfur cluster-containing proteins. Seems to help targeting proteins to be folded toward HscA. The sequence is that of Co-chaperone protein HscB from Klebsiella pneumoniae subsp. pneumoniae (strain ATCC 700721 / MGH 78578).